The chain runs to 57 residues: uncharacterized protein (57 aa).

An N-terminal signal peptide occupies residues 1 to 20 (MKKLALILFMGTLVSFYADA).

This is an uncharacterized protein from Escherichia coli (strain K12).